We begin with the raw amino-acid sequence, 333 residues long: MSRMISLREAETLAVAALEAVGVPRWEAEVTARALIDAERDGLASHGLSRLPFYLAQARSGKVVADAQARVEVAGSVIRVDARHGLAFPAIARGVERAIPLARELGLVAVAIGGSHHFGVAGAPVERLAREGLVAMAFSNAPSAMAPWGGKRPLYGTNPIAFATPRRGTDPLVIDLSLSKVARGKVMLAKKAGEPIPEGWALDIEGRPTTDPDAAIAGSMVPAGDAKGASLALMVELLTAGLTGSHFGFQASSFFEPEGEAPSVGHLMLAFDPAHFSDGYLEHIEALFQAMLEQEGVRLPGTRRHALRRERGESLELPEAVVDELRAYAVSRV.

The protein belongs to the LDH2/MDH2 oxidoreductase family.

The enzyme catalyses (2R)-3-sulfolactate + NADP(+) = 3-sulfopyruvate + NADPH + H(+). Catalyzes the reduction of sulfopyruvate to (R)-sulfolactate. Together with SlcC, provides a racemase system that converts (2S)-3-sulfolactate to (2R)-3-sulfolactate, which is degraded further by (2R)-sulfolactate sulfo-lyase. The protein is (2R)-3-sulfolactate dehydrogenase (NADP(+)) (comC) of Chromohalobacter salexigens (strain ATCC BAA-138 / DSM 3043 / CIP 106854 / NCIMB 13768 / 1H11).